Here is a 620-residue protein sequence, read N- to C-terminus: 1-deoxy-D-xylulose-5-phosphate synthase (620 aa).

Residues His80 and Gly121–Ser123 each bind thiamine diphosphate. Asp152 contributes to the Mg(2+) binding site. Thiamine diphosphate is bound by residues Gly153 to Ala154, Asn181, Tyr288, and Glu370. Asn181 contacts Mg(2+).

The protein belongs to the transketolase family. DXPS subfamily. In terms of assembly, homodimer. Requires Mg(2+) as cofactor. It depends on thiamine diphosphate as a cofactor.

The catalysed reaction is D-glyceraldehyde 3-phosphate + pyruvate + H(+) = 1-deoxy-D-xylulose 5-phosphate + CO2. It participates in metabolic intermediate biosynthesis; 1-deoxy-D-xylulose 5-phosphate biosynthesis; 1-deoxy-D-xylulose 5-phosphate from D-glyceraldehyde 3-phosphate and pyruvate: step 1/1. Functionally, catalyzes the acyloin condensation reaction between C atoms 2 and 3 of pyruvate and glyceraldehyde 3-phosphate to yield 1-deoxy-D-xylulose-5-phosphate (DXP). This Escherichia coli O6:K15:H31 (strain 536 / UPEC) protein is 1-deoxy-D-xylulose-5-phosphate synthase.